We begin with the raw amino-acid sequence, 212 residues long: MLFFVDTANIADIKEAHELGILAGVTTNPSLVAKEKDVSFHDRLREITDVVSGSVSAEVISLKAEEMIEEGKELAAIAPNITVKIPMTTDGLKAVKALTDLGIKTNVTLIFSANQALLAARAGATYVSPFLGRLDDIGQNGLDLISEVKTIFDVHGLDTQIIAASIRHPQHVTEAALRGAHIGTMPLKVIKQLTKHPLTDAGIEQFLADWNK.

Lys84 serves as the catalytic Schiff-base intermediate with substrate.

Belongs to the transaldolase family. Type 3B subfamily.

The protein resides in the cytoplasm. It carries out the reaction D-sedoheptulose 7-phosphate + D-glyceraldehyde 3-phosphate = D-erythrose 4-phosphate + beta-D-fructose 6-phosphate. The protein operates within carbohydrate degradation; pentose phosphate pathway; D-glyceraldehyde 3-phosphate and beta-D-fructose 6-phosphate from D-ribose 5-phosphate and D-xylulose 5-phosphate (non-oxidative stage): step 2/3. Its function is as follows. Transaldolase is important for the balance of metabolites in the pentose-phosphate pathway. The sequence is that of Probable transaldolase from Bacillus pumilus (strain SAFR-032).